A 229-amino-acid polypeptide reads, in one-letter code: Cytochrome c oxidase subunit 2 (229 aa).

At 1–14 (MANPSQFGFQDASS) the chain is on the mitochondrial intermembrane side. A helical transmembrane segment spans residues 15-45 (PIMEELVEFHDHALMVALAICSLVLYLLALM). Topologically, residues 46 to 58 (LVEKLSSNTVDAQ) are mitochondrial matrix. The helical transmembrane segment at 59 to 86 (EVELIWTILPAIVLILLALPSLQILYMM) threads the bilayer. Over 87–229 (DEIDEPDLTL…SWSSLLSTDS (143 aa)) the chain is Mitochondrial intermembrane. Residues His-160, Cys-195, Glu-197, Cys-199, His-203, and Met-206 each contribute to the Cu cation site. Mg(2+) is bound at residue Glu-197.

This sequence belongs to the cytochrome c oxidase subunit 2 family. As to quaternary structure, component of the cytochrome c oxidase (complex IV, CIV), a multisubunit enzyme composed of 14 subunits. The complex is composed of a catalytic core of 3 subunits MT-CO1, MT-CO2 and MT-CO3, encoded in the mitochondrial DNA, and 11 supernumerary subunits COX4I, COX5A, COX5B, COX6A, COX6B, COX6C, COX7A, COX7B, COX7C, COX8 and NDUFA4, which are encoded in the nuclear genome. The complex exists as a monomer or a dimer and forms supercomplexes (SCs) in the inner mitochondrial membrane with NADH-ubiquinone oxidoreductase (complex I, CI) and ubiquinol-cytochrome c oxidoreductase (cytochrome b-c1 complex, complex III, CIII), resulting in different assemblies (supercomplex SCI(1)III(2)IV(1) and megacomplex MCI(2)III(2)IV(2)). Found in a complex with TMEM177, COA6, COX18, COX20, SCO1 and SCO2. Interacts with TMEM177 in a COX20-dependent manner. Interacts with COX20. Interacts with COX16. The cofactor is Cu cation.

Its subcellular location is the mitochondrion inner membrane. The catalysed reaction is 4 Fe(II)-[cytochrome c] + O2 + 8 H(+)(in) = 4 Fe(III)-[cytochrome c] + 2 H2O + 4 H(+)(out). In terms of biological role, component of the cytochrome c oxidase, the last enzyme in the mitochondrial electron transport chain which drives oxidative phosphorylation. The respiratory chain contains 3 multisubunit complexes succinate dehydrogenase (complex II, CII), ubiquinol-cytochrome c oxidoreductase (cytochrome b-c1 complex, complex III, CIII) and cytochrome c oxidase (complex IV, CIV), that cooperate to transfer electrons derived from NADH and succinate to molecular oxygen, creating an electrochemical gradient over the inner membrane that drives transmembrane transport and the ATP synthase. Cytochrome c oxidase is the component of the respiratory chain that catalyzes the reduction of oxygen to water. Electrons originating from reduced cytochrome c in the intermembrane space (IMS) are transferred via the dinuclear copper A center (CU(A)) of subunit 2 and heme A of subunit 1 to the active site in subunit 1, a binuclear center (BNC) formed by heme A3 and copper B (CU(B)). The BNC reduces molecular oxygen to 2 water molecules using 4 electrons from cytochrome c in the IMS and 4 protons from the mitochondrial matrix. The polypeptide is Cytochrome c oxidase subunit 2 (MT-CO2) (Struthio camelus (Common ostrich)).